Reading from the N-terminus, the 155-residue chain is Basic phospholipase A2 PC9 (155 aa).

The first 21 residues, 1–21, serve as a signal peptide directing secretion; it reads MYPAHLLVLLAVCVSLLGASA. A propeptide spanning residues 22-27 is cleaved from the precursor; that stretch reads ISPRPL. Intrachain disulfides connect C38/C98, C54/C144, C56/C72, C71/C125, C78/C118, C87/C111, and C105/C116. The Ca(2+) site is built by Y55, G57, and G59. The active site involves H75. D76 provides a ligand contact to Ca(2+). D119 is an active-site residue.

The protein belongs to the phospholipase A2 family. Group I subfamily. D49 sub-subfamily. Requires Ca(2+) as cofactor. As to expression, expressed by the venom gland.

It localises to the secreted. It carries out the reaction a 1,2-diacyl-sn-glycero-3-phosphocholine + H2O = a 1-acyl-sn-glycero-3-phosphocholine + a fatty acid + H(+). In terms of biological role, snake venom phospholipase A2 (PLA2) that inhibits neuromuscular transmission by blocking acetylcholine release from the nerve termini. PLA2 catalyzes the calcium-dependent hydrolysis of the 2-acyl groups in 3-sn-phosphoglycerides. In Laticauda colubrina (Yellow-lipped sea krait), this protein is Basic phospholipase A2 PC9.